We begin with the raw amino-acid sequence, 297 residues long: Acetylglutamate kinase (297 aa).

Residues 72–73, R94, and N193 contribute to the substrate site; that span reads GG.

The protein belongs to the acetylglutamate kinase family. ArgB subfamily.

Its subcellular location is the cytoplasm. It catalyses the reaction N-acetyl-L-glutamate + ATP = N-acetyl-L-glutamyl 5-phosphate + ADP. It functions in the pathway amino-acid biosynthesis; L-arginine biosynthesis; N(2)-acetyl-L-ornithine from L-glutamate: step 2/4. Functionally, catalyzes the ATP-dependent phosphorylation of N-acetyl-L-glutamate. The sequence is that of Acetylglutamate kinase from Mycobacterium leprae (strain TN).